The primary structure comprises 439 residues: Homogentisate 1,2-dioxygenase (439 aa).

Residues His335, Glu341, and His371 each contribute to the Fe cation site.

The protein belongs to the homogentisate dioxygenase family. It depends on Fe cation as a cofactor.

The enzyme catalyses homogentisate + O2 = 4-maleylacetoacetate + H(+). Its pathway is amino-acid degradation; L-phenylalanine degradation; acetoacetate and fumarate from L-phenylalanine: step 4/6. The chain is Homogentisate 1,2-dioxygenase from Drosophila melanogaster (Fruit fly).